Consider the following 1157-residue polypeptide: Myosin tail region-interacting protein MTI1 (1157 aa).

The SH3 domain maps to 5 to 69 (EVPFKVVAQF…PKSFVAVQGS (65 aa)). Disordered stretches follow at residues 68 to 116 (GSEV…GPVP) and 135 to 156 (TAVSAQVQHDSSSGNGERKVPM). Over residues 77 to 89 (SSPNTGSTEQRTI) the composition is skewed to polar residues. Residues 93-110 (VEQKDLPEPISPETKKET) are compositionally biased toward basic and acidic residues. At Ser-103 the chain carries Phosphoserine. Over residues 138 to 149 (SAQVQHDSSSGN) the composition is skewed to polar residues. A phosphoserine mark is found at Ser-158 and Ser-166. 2 disordered regions span residues 231–256 (PEPINRAQVESGRIETENDQLKKDLP) and 284–888 (KKAK…PKVA). Coiled-coil stretches lie at residues 234-301 (INRA…NKNE) and 356-430 (EKEQ…GASR). Composition is skewed to basic and acidic residues over residues 242–256 (GRIETENDQLKKDLP), 284–296 (KKAKLEQEHERSA), and 312–383 (NEKT…RGEN). Residues 398-411 (EGDNDEEKEEEDSE) are compositionally biased toward acidic residues. Basic and acidic residues-rich tracts occupy residues 412–423 (ENRRAALRERMA) and 506–524 (KTLDPHATTEHEQKQEHGT). Residues 544-558 (DSDEDTDDHEFEDAN) are compositionally biased toward acidic residues. The residue at position 565 (Ser-565) is a Phosphoserine. Residues 574 to 585 (GNNESENVNSGE) are compositionally biased toward low complexity. A compositionally biased stretch (basic and acidic residues) spans 597-606 (RTAEVSHDIE). Polar residues predominate over residues 607 to 641 (NSSQNTTGNVLPVSSPQTRVARNGSINSLTKSISG). A phosphoserine mark is found at Ser-621, Ser-631, and Ser-634. Position 636 is a phosphothreonine (Thr-636). Residues Ser-638 and Ser-647 each carry the phosphoserine modification. A compositionally biased stretch (basic and acidic residues) spans 642-653 (ENRRKSINEYHD). Over residues 654-668 (TVSTNSSALTETAQD) the composition is skewed to polar residues. 2 stretches are compositionally biased toward pro residues: residues 691 to 738 (PHPV…PVSS) and 747 to 765 (SIPPVPPTPPAPPAPPAPL). The segment covering 769 to 778 (KHNEVEEHVK) has biased composition (basic and acidic residues). The segment covering 795–808 (NTAPPLPRAPPVPP) has biased composition (pro residues). Residues 832-853 (QNVTASTPSMMSTQQRVPTSVL) show a composition bias toward polar residues. Thr-850 is modified (phosphothreonine). Ser-889 carries the phosphoserine modification. 2 positions are modified to phosphothreonine: Thr-894 and Thr-895. A Glycyl lysine isopeptide (Lys-Gly) (interchain with G-Cter in ubiquitin) cross-link involves residue Lys-1012.

As to quaternary structure, binds to the SH3 domains of the type I myosins MYO3 and MYO5.

Its subcellular location is the cytoplasm. It localises to the cytoskeleton. The protein localises to the actin patch. Involved in the regulation of actin cytoskeleton. The chain is Myosin tail region-interacting protein MTI1 (BBC1) from Saccharomyces cerevisiae (strain ATCC 204508 / S288c) (Baker's yeast).